A 542-amino-acid chain; its full sequence is Neutral amino acid transporter B(0) (542 aa).

Methionine 1 carries the N-acetylmethionine modification. The Cytoplasmic segment spans residues 1-52 (MVADPPRGDSKGLAAAEPTANGGLALASIEDQGEAAGGCCGSRDRVRRCLRA). The chain crosses the membrane as a helical span at residues 53-82 (NLLVLLTVVAVVVGVALGLGVSGAGGALAL). At 83-95 (GPERLSAFVFPGE) the chain is on the extracellular side. Residues 96–117 (LLLRLLRMIILPLVVCSLIGGA) form a helical membrane-spanning segment. The Cytoplasmic segment spans residues 118 to 131 (ASLDPGALGRLGAW). The helical transmembrane segment at 132–154 (ALLFFLVTTLLASALGVALALAL) threads the bilayer. Over 155–225 (QPGAASAAIN…GTRVKVPVGQ (71 aa)) the chain is Extracellular. 2 N-linked (GlcNAc...) asparagine glycosylation sites follow: asparagine 164 and asparagine 213. The chain crosses the membrane as a helical span at residues 226–249 (EVEGMNILGLVVFAIVFGVALRKL). The Cytoplasmic segment spans residues 250-258 (GPEGELLIR). The helical transmembrane segment at 259–286 (FFNSFNEATMVLVSWIMWYAPVGIMFLV) threads the bilayer. Over 287 to 307 (AGKIVEMEDVGLLFARLGKYI) the chain is Extracellular. A helical membrane pass occupies residues 308–329 (LCCLLGHAIHGLLVLPLIYFLF). Residues 330-334 (TRKNP) lie on the Cytoplasmic side of the membrane. An intramembrane region (discontinuously helical) is located at residues 335–365 (YRFLWGIVTPLATAFGTSSSSATLPLMMKCV). The Cytoplasmic segment spans residues 366-374 (EENNGVAKH). Residues 375 to 401 (ISRFILPIGATVNMDGAALFQCVAAVF) form a helical membrane-spanning segment. Na(+) contacts are provided by glycine 383, threonine 385, and asparagine 387. The Extracellular portion of the chain corresponds to 402–414 (IAQLSEQSLDFVK). The segment at residues 415 to 448 (IITILVTATASSVGAAGIPAGGVLTLAIILEAVN) is an intramembrane region (discontinuously helical). The Extracellular portion of the chain corresponds to 449–461 (LPVDHISLILAVD). Residues 462–483 (WLVDRSCTVLNVEGDALGAGLL) traverse the membrane as a helical segment. Residues asparagine 472 and aspartate 476 each contribute to the Na(+) site. At 484-542 (QNYVDRTEVRSTEPELIQVKSELPLDPLPAPTEEGNPLLRHYRGPAGDATVASEKESVM) the chain is on the cytoplasmic side. Serine 494 is subject to Phosphoserine. Threonine 495 carries the phosphothreonine modification. Phosphoserine is present on residues serine 504, serine 536, and serine 540. The segment at 509-542 (DPLPAPTEEGNPLLRHYRGPAGDATVASEKESVM) is disordered.

Belongs to the dicarboxylate/amino acid:cation symporter (DAACS) (TC 2.A.23) family. SLC1A5 subfamily. Homotrimer.

It is found in the cell membrane. The protein localises to the melanosome. It carries out the reaction L-glutamine(out) + L-serine(in) + Na(+)(out) = L-glutamine(in) + L-serine(out) + Na(+)(in). It catalyses the reaction L-glutamine(in) + L-serine(out) + Na(+)(out) = L-glutamine(out) + L-serine(in) + Na(+)(in). The catalysed reaction is L-threonine(in) + L-glutamine(out) + Na(+)(out) = L-threonine(out) + L-glutamine(in) + Na(+)(in). The enzyme catalyses L-threonine(out) + L-glutamine(in) + Na(+)(out) = L-threonine(in) + L-glutamine(out) + Na(+)(in). It carries out the reaction L-asparagine(in) + L-glutamine(out) + Na(+)(out) = L-asparagine(out) + L-glutamine(in) + Na(+)(in). It catalyses the reaction L-asparagine(out) + L-glutamine(in) + Na(+)(out) = L-asparagine(in) + L-glutamine(out) + Na(+)(in). The catalysed reaction is L-glutamine(in) + L-alanine(out) + Na(+)(out) = L-glutamine(out) + L-alanine(in) + Na(+)(in). The enzyme catalyses L-valine(out) + L-glutamine(in) + Na(+)(out) = L-valine(in) + L-glutamine(out) + Na(+)(in). It carries out the reaction L-glutamine(in) + L-methionine(out) + Na(+)(out) = L-glutamine(out) + L-methionine(in) + Na(+)(in). It catalyses the reaction L-glutamine(in) + L-glutamate(out) + Na(+)(out) + H(+)(out) = L-glutamine(out) + L-glutamate(in) + Na(+)(in) + H(+)(in). The catalysed reaction is D-serine(in) + L-glutamine(out) + Na(+)(out) = D-serine(out) + L-glutamine(in) + Na(+)(in). The enzyme catalyses D-serine(in) + L-alanine(out) + Na(+)(out) = D-serine(out) + L-alanine(in) + Na(+)(in). It carries out the reaction nitrate(in) = nitrate(out). It catalyses the reaction iodide(out) = iodide(in). The catalysed reaction is thiocyanate(in) = thiocyanate(out). Sodium-coupled antiporter of neutral amino acids. In a tri-substrate transport cycle, exchanges neutral amino acids between the extracellular and intracellular compartments, coupled to the inward cotransport of at least one sodium ion. The preferred substrate is the essential amino acid L-glutamine, a precursor for biosynthesis of proteins, nucleotides and amine sugars as well as an alternative fuel for mitochondrial oxidative phosphorylation. Exchanges L-glutamine with other neutral amino acids such as L-serine, L-threonine and L-asparagine in a bidirectional way. Provides L-glutamine to proliferating stem and activated cells driving the metabolic switch toward cell differentiation. The transport cycle is usually pH-independent, with the exception of L-glutamate. Transports extracellular L-glutamate coupled to the cotransport of one proton and one sodium ion in exchange for intracellular L-glutamine counter-ion. May provide for L-glutamate uptake in glial cells regulating glutamine/glutamate cycle in the nervous system. Can transport D-amino acids. Mediates D-serine release from the retinal glia potentially affecting NMDA receptor function in retinal neurons. Displays sodium- and amino acid-dependent but uncoupled channel-like anion conductance with a preference SCN(-) &gt;&gt; NO3(-) &gt; I(-) &gt; Cl(-). Through binding of the fusogenic protein syncytin-1/ERVW-1 may mediate trophoblasts syncytialization, the spontaneous fusion of their plasma membranes, an essential process in placental development. The sequence is that of Neutral amino acid transporter B(0) (SLC1A5) from Macaca fascicularis (Crab-eating macaque).